The chain runs to 327 residues: Serum response factor homolog (327 aa).

The disordered stretch occupies residues 12–43 (QKLQNASPALPEGTSSTPTPSSSTGLLPNGKK). Low complexity predominate over residues 25–35 (TSSTPTPSSST). The MADS-box domain occupies 45 to 105 (KGRVKIKMEY…GHVYTYATPK (61 aa)). Residues 189–225 (TFGEDDYNNDESGDDSDSEEASSDIKEEYQGSPTMVK) form a disordered region. Residues 191-210 (GEDDYNNDESGDDSDSEEAS) show a composition bias toward acidic residues.

In terms of tissue distribution, expressed in muscle, varying with age, decreasing twofold during the first week of adulthood.

It localises to the nucleus. Functionally, transcription factor. Regulates myogenesis, in cooperation with transcription factors hlh-1 and hnd-1. Required for maintenance of muscle in adulthood. This is Serum response factor homolog from Caenorhabditis elegans.